We begin with the raw amino-acid sequence, 229 residues long: 5'-methylthioadenosine/S-adenosylhomocysteine nucleosidase (229 aa).

The Proton acceptor role is filled by glutamate 12. Substrate-binding positions include glycine 78, isoleucine 152, and 173–174; that span reads ME. The active-site Proton donor is the aspartate 197.

It belongs to the PNP/UDP phosphorylase family. MtnN subfamily.

It catalyses the reaction S-adenosyl-L-homocysteine + H2O = S-(5-deoxy-D-ribos-5-yl)-L-homocysteine + adenine. It carries out the reaction S-methyl-5'-thioadenosine + H2O = 5-(methylsulfanyl)-D-ribose + adenine. The enzyme catalyses 5'-deoxyadenosine + H2O = 5-deoxy-D-ribose + adenine. It functions in the pathway amino-acid biosynthesis; L-methionine biosynthesis via salvage pathway; S-methyl-5-thio-alpha-D-ribose 1-phosphate from S-methyl-5'-thioadenosine (hydrolase route): step 1/2. Functionally, catalyzes the irreversible cleavage of the glycosidic bond in both 5'-methylthioadenosine (MTA) and S-adenosylhomocysteine (SAH/AdoHcy) to adenine and the corresponding thioribose, 5'-methylthioribose and S-ribosylhomocysteine, respectively. Also cleaves 5'-deoxyadenosine, a toxic by-product of radical S-adenosylmethionine (SAM) enzymes, into 5-deoxyribose and adenine. The protein is 5'-methylthioadenosine/S-adenosylhomocysteine nucleosidase of Pasteurella multocida (strain Pm70).